Reading from the N-terminus, the 210-residue chain is FMN-dependent NADH:quinone oxidoreductase 8 (210 aa).

FMN-binding positions include Ser10 and 16-18 (SIS).

This sequence belongs to the azoreductase type 1 family. Homodimer. FMN is required as a cofactor.

It catalyses the reaction 2 a quinone + NADH + H(+) = 2 a 1,4-benzosemiquinone + NAD(+). The catalysed reaction is N,N-dimethyl-1,4-phenylenediamine + anthranilate + 2 NAD(+) = 2-(4-dimethylaminophenyl)diazenylbenzoate + 2 NADH + 2 H(+). In terms of biological role, quinone reductase that provides resistance to thiol-specific stress caused by electrophilic quinones. Its function is as follows. Also exhibits azoreductase activity. Catalyzes the reductive cleavage of the azo bond in aromatic azo compounds to the corresponding amines. The sequence is that of FMN-dependent NADH:quinone oxidoreductase 8 from Burkholderia lata (strain ATCC 17760 / DSM 23089 / LMG 22485 / NCIMB 9086 / R18194 / 383).